The sequence spans 489 residues: Protein nucleotidyltransferase YdiU (489 aa).

ATP contacts are provided by Gly-88, Gly-90, Arg-91, Lys-111, Asp-123, Gly-124, Arg-174, and Arg-181. Asp-250 acts as the Proton acceptor in catalysis. Mg(2+) contacts are provided by Asn-251 and Asp-260. An ATP-binding site is contributed by Asp-260.

Belongs to the SELO family. The cofactor is Mg(2+). Mn(2+) serves as cofactor.

The enzyme catalyses L-seryl-[protein] + ATP = 3-O-(5'-adenylyl)-L-seryl-[protein] + diphosphate. It catalyses the reaction L-threonyl-[protein] + ATP = 3-O-(5'-adenylyl)-L-threonyl-[protein] + diphosphate. It carries out the reaction L-tyrosyl-[protein] + ATP = O-(5'-adenylyl)-L-tyrosyl-[protein] + diphosphate. The catalysed reaction is L-histidyl-[protein] + UTP = N(tele)-(5'-uridylyl)-L-histidyl-[protein] + diphosphate. The enzyme catalyses L-seryl-[protein] + UTP = O-(5'-uridylyl)-L-seryl-[protein] + diphosphate. It catalyses the reaction L-tyrosyl-[protein] + UTP = O-(5'-uridylyl)-L-tyrosyl-[protein] + diphosphate. In terms of biological role, nucleotidyltransferase involved in the post-translational modification of proteins. It can catalyze the addition of adenosine monophosphate (AMP) or uridine monophosphate (UMP) to a protein, resulting in modifications known as AMPylation and UMPylation. In Vibrio parahaemolyticus serotype O3:K6 (strain RIMD 2210633), this protein is Protein nucleotidyltransferase YdiU.